We begin with the raw amino-acid sequence, 434 residues long: Serine hydroxymethyltransferase (434 aa).

Residue 120–122 coordinates (6S)-5,6,7,8-tetrahydrofolate; that stretch reads GHI. Residue Lys-236 is modified to N6-(pyridoxal phosphate)lysine. Glu-255 serves as a coordination point for (6S)-5,6,7,8-tetrahydrofolate.

The protein belongs to the SHMT family. In terms of assembly, homodimer. Pyridoxal 5'-phosphate is required as a cofactor.

It localises to the cytoplasm. It functions in the pathway amino-acid biosynthesis; glycine biosynthesis; glycine from L-serine: step 1/1. Functionally, catalyzes the reversible interconversion of serine and glycine with a modified folate serving as the one-carbon carrier. Also exhibits a pteridine-independent aldolase activity toward beta-hydroxyamino acids, producing glycine and aldehydes, via a retro-aldol mechanism. This Korarchaeum cryptofilum (strain OPF8) protein is Serine hydroxymethyltransferase.